Reading from the N-terminus, the 155-residue chain is MAPK regulated corepressor interacting protein 2 (155 aa).

An N-acetylmethionine modification is found at methionine 1. Residues 1–59 (MYTITKGPSKLVAQRRTGPTQQQVESRLGELLKCRHSAPTPQHPRAQPPGPWPLSSPGP) form a disordered region. The residue at position 35 (arginine 35) is an Omega-N-methylarginine. The span at 46–56 (AQPPGPWPLSS) shows a compositional bias: pro residues. Residue serine 56 is modified to Phosphoserine. Arginine 60 carries the post-translational modification Omega-N-methylarginine. A Phosphoserine modification is found at serine 77.

The protein belongs to the MCRIP family. Interacts with DDX6. Interacts with MCRIP1.

The protein localises to the cytoplasm. It localises to the stress granule. Its subcellular location is the nucleus. The sequence is that of MAPK regulated corepressor interacting protein 2 (MCRIP2) from Bos taurus (Bovine).